Consider the following 492-residue polypeptide: G2/mitotic-specific cyclin CYB1 (492 aa).

Residues 1–176 (MPQVTKTNNE…QPEVGERSQS (176 aa)) form a disordered region. The span at 23-33 (QESISTIKNTT) shows a compositional bias: polar residues. Residues 34-58 (ISNSQHKQQTQQQISSPPQVSVTSS) show a composition bias toward low complexity. Residues 59–83 (EGVSHVNTRQYLGDVSNQYITNAKP) are compositionally biased toward polar residues. Positions 111 to 135 (ASDNNNNGSTSSSSNSSNNNNNDAN) are enriched in low complexity.

This sequence belongs to the cyclin family. Cyclin AB subfamily.

In terms of biological role, essential for the control of the cell cycle at the G2/M (mitosis) transition. Interacts with the CDC2 protein kinase to form MPF. G2/M cyclins accumulate steadily during G2 and are abruptly destroyed at mitosis. This Candida albicans (Yeast) protein is G2/mitotic-specific cyclin CYB1 (CYB1).